The following is a 132-amino-acid chain: Group 2 truncated hemoglobin YjbI (132 aa).

The heme site is built by Thr45, Lys48, Tyr63, and His76.

Belongs to the truncated hemoglobin family. Group II subfamily. Monomer. Heme serves as cofactor.

In terms of biological role, hemoglobin-like protein that exhibits a low peroxidase activity. Its very high oxygen affinity may rule out the possibility that it is involved in oxygen transport. This is Group 2 truncated hemoglobin YjbI (yjbI) from Bacillus subtilis (strain 168).